The following is a 320-amino-acid chain: Cytochrome f (320 aa).

The N-terminal stretch at 1–35 (MENRNTFSWVKEQMTRSISVSIMIYVITQTSISNA) is a signal peptide. Heme is bound by residues Tyr-36, Cys-56, Cys-59, and His-60. The helical transmembrane segment at 286–306 (VQGLLFFFASVILAQVFLVLK) threads the bilayer.

The protein belongs to the cytochrome f family. The 4 large subunits of the cytochrome b6-f complex are cytochrome b6, subunit IV (17 kDa polypeptide, petD), cytochrome f and the Rieske protein, while the 4 small subunits are PetG, PetL, PetM and PetN. The complex functions as a dimer. Heme serves as cofactor.

The protein localises to the plastid. It is found in the chloroplast thylakoid membrane. Functionally, component of the cytochrome b6-f complex, which mediates electron transfer between photosystem II (PSII) and photosystem I (PSI), cyclic electron flow around PSI, and state transitions. This chain is Cytochrome f, found in Agrostis stolonifera (Creeping bentgrass).